We begin with the raw amino-acid sequence, 114 residues long: uncharacterized protein (114 aa).

2 helical membrane-spanning segments follow: residues 14–34 (VMSA…CFLL) and 75–95 (VIII…HPVA).

The protein resides in the membrane. This is an uncharacterized protein from Homo sapiens (Human).